Here is a 927-residue protein sequence, read N- to C-terminus: Huntington interacting protein related 1 (927 aa).

Residues 7–136 enclose the ENTH domain; sequence AREVFVRAQL…TFHNKYPVVP (130 aa). Positions 336-524 form a coiled coil; sequence RAVEDEKFAK…RESHANQLVQ (189 aa). One can recognise an I/LWEQ domain in the interval 673–914; that stretch reads QTDIDKDVVG…ALRKQHYHMA (242 aa).

The protein belongs to the SLA2 family.

It is found in the cytoplasm. The protein localises to the cytoskeleton. Its function is as follows. Regulates pre-synaptic vesicle recycling at neuromuscular junctions of mechanosensory neurons. Plays a role in maintaining a normal defecation cycle. The sequence is that of Huntington interacting protein related 1 (hipr-1) from Caenorhabditis elegans.